We begin with the raw amino-acid sequence, 209 residues long: ATP-dependent Clp protease proteolytic subunit (209 aa).

Ser-103 (nucleophile) is an active-site residue. Residue His-128 is part of the active site.

This sequence belongs to the peptidase S14 family. Fourteen ClpP subunits assemble into 2 heptameric rings which stack back to back to give a disk-like structure with a central cavity, resembling the structure of eukaryotic proteasomes.

The protein resides in the cytoplasm. It carries out the reaction Hydrolysis of proteins to small peptides in the presence of ATP and magnesium. alpha-casein is the usual test substrate. In the absence of ATP, only oligopeptides shorter than five residues are hydrolyzed (such as succinyl-Leu-Tyr-|-NHMec, and Leu-Tyr-Leu-|-Tyr-Trp, in which cleavage of the -Tyr-|-Leu- and -Tyr-|-Trp bonds also occurs).. Cleaves peptides in various proteins in a process that requires ATP hydrolysis. Has a chymotrypsin-like activity. Plays a major role in the degradation of misfolded proteins. The protein is ATP-dependent Clp protease proteolytic subunit of Lawsonia intracellularis (strain PHE/MN1-00).